The sequence spans 320 residues: Probable trehalose-phosphate phosphatase C (320 aa).

Belongs to the trehalose phosphatase family. Requires a divalent metal cation as cofactor.

The enzyme catalyses alpha,alpha-trehalose 6-phosphate + H2O = alpha,alpha-trehalose + phosphate. It participates in glycan biosynthesis; trehalose biosynthesis. Its function is as follows. Removes the phosphate from trehalose 6-phosphate to produce free trehalose. Trehalose accumulation in plant may improve abiotic stress tolerance. In Arabidopsis thaliana (Mouse-ear cress), this protein is Probable trehalose-phosphate phosphatase C (TPPC).